We begin with the raw amino-acid sequence, 261 residues long: Hydroxyethylthiazole kinase (261 aa).

Position 45 (methionine 45) interacts with substrate. Positions 121 and 167 each coordinate ATP. Glycine 194 lines the substrate pocket.

This sequence belongs to the Thz kinase family. Mg(2+) serves as cofactor.

It catalyses the reaction 5-(2-hydroxyethyl)-4-methylthiazole + ATP = 4-methyl-5-(2-phosphooxyethyl)-thiazole + ADP + H(+). Its pathway is cofactor biosynthesis; thiamine diphosphate biosynthesis; 4-methyl-5-(2-phosphoethyl)-thiazole from 5-(2-hydroxyethyl)-4-methylthiazole: step 1/1. Its function is as follows. Catalyzes the phosphorylation of the hydroxyl group of 4-methyl-5-beta-hydroxyethylthiazole (THZ). In Vibrio atlanticus (strain LGP32) (Vibrio splendidus (strain Mel32)), this protein is Hydroxyethylthiazole kinase.